A 293-amino-acid polypeptide reads, in one-letter code: Kynurenine formamidase (293 aa).

The short motif at 84–88 is the HGGXW element; the sequence is HGGYW. Serine 153 functions as the Nucleophile in the catalytic mechanism. Residues aspartate 236 and histidine 268 contribute to the active site.

The protein belongs to the kynurenine formamidase family. As to quaternary structure, homodimer.

It localises to the cytoplasm. Its subcellular location is the cytosol. The protein localises to the nucleus. It catalyses the reaction N-formyl-L-kynurenine + H2O = L-kynurenine + formate + H(+). Its pathway is amino-acid degradation; L-tryptophan degradation via kynurenine pathway; L-kynurenine from L-tryptophan: step 2/2. Catalyzes the hydrolysis of N-formyl-L-kynurenine to L-kynurenine, the second step in the kynurenine pathway of tryptophan degradation. Kynurenine may be further oxidized to nicotinic acid, NAD(H) and NADP(H). Required for elimination of toxic metabolites. The polypeptide is Kynurenine formamidase (afmid) (Danio rerio (Zebrafish)).